The sequence spans 116 residues: Propanediol dehydratase-reactivating factor small subunit (116 aa).

A Mg(2+)-binding site is contributed by glutamate 31.

It belongs to the DdrB/PduH family. As to quaternary structure, forms a heterotetramer PduG(2)/PduH(2). Mg(2+) is required as a cofactor.

The protein resides in the bacterial microcompartment. The catalysed reaction is ATP + H2O = ADP + phosphate + H(+). It functions in the pathway polyol metabolism; 1,2-propanediol degradation. In terms of biological role, small subunit of the propanediol dehydratase-reactivating factor (DDR), which reactivates suicidally inhibited adenosylcobalamin-dependent propanediol dehydratase (diol dehydratase, DDH) found in the bacterial microcompartment (BMC) dedicated to 1,2-propanediol (1,2-PD) degradation. Reactivates inactivated DDH in the presence of ATP, Mg(2+) and free adenosylcobalamin (AdoCbl), by mediating the exchange of the tightly bound damaged cofactor AdoCbl for a free intact one. Its function is as follows. The 1,2-PD-specific bacterial microcompartment (BMC) concentrates low levels of 1,2-PD catabolic enzymes, concentrates volatile reaction intermediates thus enhancing pathway flux and keeps the level of toxic, mutagenic propionaldehyde low. The chain is Propanediol dehydratase-reactivating factor small subunit from Salmonella typhimurium (strain LT2 / SGSC1412 / ATCC 700720).